Here is a 1620-residue protein sequence, read N- to C-terminus: DNA (cytosine-5)-methyltransferase 1 (1620 aa).

The disordered stretch occupies residues 1-21 (MPARTAPARVPALASPAGSLP). Residues 1 to 120 (MPARTAPARV…SRPTWRAEMA (120 aa)) form an interaction with DMAP1 region. An interaction with DNMT3A region spans residues 1-145 (MPARTAPARV…RRSKSDSDTL (145 aa)). Interaction with the PRC2/EED-EZH2 complex regions lie at residues 1-343 (MPAR…SERK) and 305-609 (APET…RVMG). A Phosphoserine modification is found at S15. One can recognise a DMAP1-binding domain in the interval 16-109 (PAGSLPDHVR…TQKANGCPAN (94 aa)). An N6,N6-dimethyllysine; by EHMT2 modification is found at K70. A disordered region spans residues 96–369 (THTLTQKANG…PECGQHLDDP (274 aa)). The span at 126–137 (PRSRPKPRGPRR) shows a compositional bias: basic residues. S138 bears the Phosphoserine mark. Residue K139 is modified to N6-methyllysine; by SETD7. A Phosphoserine modification is found at S140. Positions 144-155 (TLSVETSPSSVA) are enriched in polar residues. A Phosphoserine; by CK1 modification is found at S146. The interval 147–217 (VETSPSSVAT…SGAAAAVEKL (71 aa)) is interaction with DNMT3B. Phosphoserine occurs at positions 150 and 152. The tract at residues 161–172 (RQTTITAHFTKG) is interaction with PCNA. T164 is modified (phosphothreonine). K171 bears the N6-acetyllysine mark. The Nuclear localization signal signature appears at 175–202 (KRKPKEESEEGNSAESAAEERDQDKKRR). Residues 192-205 (AEERDQDKKRRVVD) are compositionally biased toward basic and acidic residues. S240 bears the Phosphoserine mark. 2 stretches are compositionally biased toward basic and acidic residues: residues 246-267 (RELSLRRKSKEDPDREARPETH) and 286-300 (QPRDPAAKRRPKEAE). Position 255 is an N6-acetyllysine; alternate (K255). Residue K255 forms a Glycyl lysine isopeptide (Lys-Gly) (interchain with G-Cter in SUMO2); alternate linkage. Positions 308–317 (TPEDRDEDER) are enriched in acidic residues. The DNA replication foci-targeting sequence stretch occupies residues 328–556 (KLESHTVPVQ…NVNRFTEDSL (229 aa)). Residues C359 and C362 each coordinate Zn(2+). K372 is subject to N6-acetyllysine. Zn(2+) is bound by residues C420 and H424. 2 positions are modified to phosphoserine: S515 and S555. The CXXC-type zinc finger occupies 649–695 (NAMKRRRCGVCEVCQQPECGKCKACKDMVKFGGTGRSKQACLKRRCP). 8 residues coordinate Zn(2+): C656, C659, C662, C667, C670, C673, C689, and C694. The tract at residues 696 to 757 (NLAVKEADDD…TYYQKVSIDE (62 aa)) is autoinhibitory linker. Residues 696–813 (NLAVKEADDD…TDTVLGATSD (118 aa)) are interaction with HDAC1. The segment covering 702 to 713 (ADDDEEADDDVS) has biased composition (acidic residues). The disordered stretch occupies residues 702 to 732 (ADDDEEADDDVSEMPSPKKLHQGKKKKQNKD). Residues S713 and S717 each carry the phosphoserine modification. Positions 719-730 (KKLHQGKKKKQN) are enriched in basic residues. S735 carries the phosphoserine modification. K752 carries the N6-acetyllysine modification. One can recognise a BAH 1 domain in the interval 758 to 884 (EMLEVGDCVS…QEYARFESPP (127 aa)). S882 is subject to Phosphoserine. N6-acetyllysine is present on residues K895, K961, K965, and K979. In terms of domain architecture, BAH 2 spans 976-1103 (HYRKYSDYIK…SKTKNFEDPP (128 aa)). A disordered region spans residues 1097 to 1136 (KNFEDPPNHARSPGNKGKGKGKGKGKGKHQVSEPKEPEAA). Tandem repeats lie at residues 1112–1113 (KG), 1114–1115 (KG), 1116–1117 (KG), 1118–1119 (KG), 1120–1121 (KG), and 1122–1123 (KG). The 7 X 2 AA tandem repeats of K-G stretch occupies residues 1112–1125 (KGKGKGKGKGKGKH). Positions 1113–1125 (GKGKGKGKGKGKH) are enriched in basic residues. N6-acetyllysine occurs at positions 1114, 1116, 1118, 1120, 1122, and 1124. The stretch at 1124 to 1125 (KH) is one 7; approximate repeat. The interval 1124–1620 (KHQVSEPKEP…KAKEEAATKD (497 aa)) is interaction with the PRC2/EED-EZH2 complex. Residues 1126-1135 (QVSEPKEPEA) show a composition bias toward basic and acidic residues. The region spanning 1142–1601 (LRTLDVFSGC…LEIKLCLLSS (460 aa)) is the SAM-dependent MTase C5-type domain. A catalytic region spans residues 1142–1620 (LRTLDVFSGC…KAKEEAATKD (479 aa)). Residues S1149, 1153–1154 (GL), 1171–1172 (EM), and 1193–1194 (DC) contribute to the S-adenosyl-L-methionine site. Residue C1229 is part of the active site. Residues K1352 and K1418 each carry the N6-acetyllysine modification. V1582 contacts S-adenosyl-L-methionine. K1611 is covalently cross-linked (Glycyl lysine isopeptide (Lys-Gly) (interchain with G-Cter in SUMO2)).

The protein belongs to the class I-like SAM-binding methyltransferase superfamily. C5-methyltransferase family. In terms of assembly, homodimer. Forms a stable complex with E2F1, BB1 and HDAC1. Forms a complex with DMAP1 and HDAC2, with direct interaction. Interacts with the PRC2/EED-EZH2 complex. Probably part of a corepressor complex containing ZNF304, TRIM28, SETDB1 and DNMT1. Interacts with UHRF1; promoting its recruitment to hemimethylated DNA. Interacts with USP7, promoting its deubiquitination. Interacts with BAZ2A/TIP5. Interacts with PCNA. Interacts with MBD2 and MBD3. Interacts with DNMT3A and DNMT3B. Interacts with UBC9. Interacts with HDAC1. Interacts with CSNK1D. Interacts with SIRT7. Interacts with ZNF263; recruited to the SIX3 promoter along with other proteins involved in chromatin modification and transcriptional corepression where it contributes to transcriptional repression. Interacts with L3MBTL3 and DCAF5; the interaction requires DNMT1 methylation at Lys-139 and is necessary to target DNMT1 for ubiquitination by the CRL4-DCAF5 E3 ubiquitin ligase complex and proteasomal degradation. Interacts with PHF20L1; the interaction requires DNMT1 methylation at Lys-139 and protects DNMT1 from ubiquitination and proteasomal degradation. In terms of processing, sumoylated; sumoylation increases activity. Post-translationally, phosphorylation at Ser-146 by CK1 reduces DNA-binding activity. Acetylation on multiple lysines, mainly by KAT2B/PCAF, regulates cell cycle G(2)/M transition. Deacetylation of Lys-1352 and Lys-1418 by SIRT1 increases methyltransferase activity. In terms of processing, phosphorylation of Ser-152 by CDKs is important for enzymatic activity and protein stability. Phosphorylation of Ser-140 by AKT1 prevents methylation by SETD7 thereby increasing DNMT1 stability. Post-translationally, methylation at Lys-139 by SETD7 is necessary for the regulation of DNMT1 proteasomal degradation. Ubiquitinated by UHRF1; interaction with USP7 counteracts ubiquitination by UHRF1 by promoting deubiquitination and preventing degradation by the proteasome. Isoform 1 is expressed in embryonic stem cells and in somatic tissues. Isoform 2 is expressed in oocytes, preimplantation embryos, testis and in skeletal muscle during myogenesis.

Its subcellular location is the nucleus. It localises to the cytoplasm. It carries out the reaction a 2'-deoxycytidine in DNA + S-adenosyl-L-methionine = a 5-methyl-2'-deoxycytidine in DNA + S-adenosyl-L-homocysteine + H(+). Allosterically regulated. The binding of 5-methylcytosine-containing DNA to the N-terminal parts of DNMT1 causes an allosteric activation of the catalytic domain by a direct interaction of its Zn-binding domain with the catalytic domain. Its function is as follows. Methylates CpG residues. Preferentially methylates hemimethylated DNA. Associates with DNA replication sites in S phase maintaining the methylation pattern in the newly synthesized strand, that is essential for epigenetic inheritance. Associates with chromatin during G2 and M phases to maintain DNA methylation independently of replication. It is responsible for maintaining methylation patterns established in development. DNA methylation is coordinated with methylation of histones. Mediates transcriptional repression by direct binding to HDAC2. In association with DNMT3B and via the recruitment of CTCFL/BORIS, involved in activation of BAG1 gene expression by modulating dimethylation of promoter histone H3 at H3K4 and H3K9. Probably forms a corepressor complex required for activated KRAS-mediated promoter hypermethylation and transcriptional silencing of tumor suppressor genes (TSGs) or other tumor-related genes in colorectal cancer (CRC) cells. Also required to maintain a transcriptionally repressive state of genes in undifferentiated embryonic stem cells (ESCs). Associates at promoter regions of tumor suppressor genes (TSGs) leading to their gene silencing. Promotes tumor growth. The protein is DNA (cytosine-5)-methyltransferase 1 (Dnmt1) of Mus musculus (Mouse).